The following is a 203-amino-acid chain: Peptide deformylase (203 aa).

Residues cysteine 130 and histidine 173 each coordinate Fe cation. Glutamate 174 is a catalytic residue. Histidine 177 serves as a coordination point for Fe cation.

It belongs to the polypeptide deformylase family. The cofactor is Fe(2+).

It carries out the reaction N-terminal N-formyl-L-methionyl-[peptide] + H2O = N-terminal L-methionyl-[peptide] + formate. Functionally, removes the formyl group from the N-terminal Met of newly synthesized proteins. Requires at least a dipeptide for an efficient rate of reaction. N-terminal L-methionine is a prerequisite for activity but the enzyme has broad specificity at other positions. The sequence is that of Peptide deformylase from Streptococcus pneumoniae serotype 4 (strain ATCC BAA-334 / TIGR4).